We begin with the raw amino-acid sequence, 239 residues long: Protein UL20 homolog (239 aa).

Transmembrane regions (helical) follow at residues 65–81, 140–156, and 189–208; these read PSFSAHVVLFAISALVI, FVIGCMALGRTVAFMVV, and LMPLISVRSAVCLVIISTAV.

The protein belongs to the alphaherpesvirinae UL20 family. In terms of assembly, interacts with gK (via N-terminus); this interaction plays a role in the coordinate transport of UL20 and gK to the trans-Golgi network (TGN), and is required for their cell surface expression. Interacts with gB.

The protein resides in the virion. The protein localises to the host cell membrane. It is found in the host endosome membrane. Its subcellular location is the host Golgi apparatus membrane. It localises to the host nucleus membrane. In terms of biological role, plays an essential role in egress of virus particles from the nucleus, cytoplasmic envelopment and virus-induced cell fusion. Forms a functional protein complex with gK and this interaction is absolutely essential for their coordinate intracellular transport, gK glycosylation, expression on host cell surface, and function. Together, they modulate gB-mediated virus-induced cell fusion and virion egress and therefore actively participate in these processes. The polypeptide is Protein UL20 homolog (Equus caballus (Horse)).